Here is a 229-residue protein sequence, read N- to C-terminus: Large ribosomal subunit protein uL1 (229 aa).

This sequence belongs to the universal ribosomal protein uL1 family. Part of the 50S ribosomal subunit.

In terms of biological role, binds directly to 23S rRNA. The L1 stalk is quite mobile in the ribosome, and is involved in E site tRNA release. Protein L1 is also a translational repressor protein, it controls the translation of the L11 operon by binding to its mRNA. The polypeptide is Large ribosomal subunit protein uL1 (Bifidobacterium animalis subsp. lactis (strain AD011)).